The chain runs to 438 residues: sn-glycerol-3-phosphate-binding periplasmic protein UgpB (438 aa).

A signal peptide spans 1–23 (MISLRHTALGLALSLAFTGQALA). Residues Tyr-65, Glu-89, Ser-144, Ser-270, Gly-307, Tyr-346, and Arg-397 each contribute to the sn-glycerol 3-phosphate site.

It belongs to the bacterial solute-binding protein 1 family. As to quaternary structure, the complex is composed of two ATP-binding proteins (UgpC), two transmembrane proteins (UgpA and UgpE) and a solute-binding protein (UgpB).

It is found in the periplasm. Part of the ABC transporter complex UgpBAEC involved in sn-glycerol-3-phosphate (G3P) import. Binds G3P. This is sn-glycerol-3-phosphate-binding periplasmic protein UgpB (ugpB) from Salmonella paratyphi A (strain ATCC 9150 / SARB42).